The sequence spans 273 residues: DnaJ homolog subfamily C member 27 (273 aa).

Residues 1-18 (MEANMPKRKEPGRSLRIK) form a required for interaction with MAPK1 region. Residues 23–30 (GNAEVGKS), 71–75 (DMAGH), and 134–137 (NKID) contribute to the GTP site. The J domain maps to 217 to 273 (GSWDMLGVKPGASRDEVNKACRKLAVLLHPDKCVAPGSEDAFKAVVNARTALLKNIK).

The protein belongs to the small GTPase superfamily. Rab family. In terms of assembly, interacts directly with MAPK1 (wild-type and kinase-deficient forms). Interacts directly (in GTP-bound form) with MAP2K1 (wild-type and kinase-deficient forms).

Its subcellular location is the nucleus. In terms of biological role, GTPase which can activate the MEK/ERK pathway and induce cell transformation when overexpressed. May act as a nuclear scaffold for MAPK1, probably by association with MAPK1 nuclear export signal leading to enhanced ERK1/ERK2 signaling. In Pongo abelii (Sumatran orangutan), this protein is DnaJ homolog subfamily C member 27 (DNAJC27).